Here is a 300-residue protein sequence, read N- to C-terminus: Protein SPEAR4 (300 aa).

The segment covering 1 to 10 (MCSKTSSVSY) has biased composition (polar residues). The tract at residues 1–45 (MCSKTSSVSYGNREDDDNYSSLCPKKQKHNNGGKKRVPRRGPGVA) is disordered. Residues 25-39 (KKQKHNNGGKKRVPR) show a composition bias toward basic residues. Positions 40-48 (RGPGVAELE) match the SPL motif. The EAR signature appears at 294 to 300 (IDLRLKL).

As to quaternary structure, interacts with SPL and SPEAR2. Expressed in leaves.

Functionally, adapter-like transcriptional repressor recruiting TPL/TPR coepressors to inhibit TCP transcription factors. May be involved in leaf development. The polypeptide is Protein SPEAR4 (Arabidopsis thaliana (Mouse-ear cress)).